An 815-amino-acid polypeptide reads, in one-letter code: Translation initiation factor IF-2 (815 aa).

The region spanning 315–482 (ARPPVVTIMG…AISLTAEVLE (168 aa)) is the tr-type G domain. The G1 stretch occupies residues 324–331 (GHVDHGKT). 324–331 (GHVDHGKT) lines the GTP pocket. Residues 349-353 (GITQH) form a G2 region. The G3 stretch occupies residues 370–373 (DTPG). GTP contacts are provided by residues 370 to 374 (DTPGH) and 424 to 427 (NKID). The G4 stretch occupies residues 424 to 427 (NKID). The G5 stretch occupies residues 460–462 (SAY).

It belongs to the TRAFAC class translation factor GTPase superfamily. Classic translation factor GTPase family. IF-2 subfamily.

The protein resides in the cytoplasm. Its function is as follows. One of the essential components for the initiation of protein synthesis. Protects formylmethionyl-tRNA from spontaneous hydrolysis and promotes its binding to the 30S ribosomal subunits. Also involved in the hydrolysis of GTP during the formation of the 70S ribosomal complex. This Ruthia magnifica subsp. Calyptogena magnifica protein is Translation initiation factor IF-2.